Reading from the N-terminus, the 514-residue chain is Glutathione-binding protein GsiB (514 aa).

Positions 1 to 26 are cleaved as a signal peptide; that stretch reads MARAVHRSGLVALGIATALMASCAFA.

This sequence belongs to the bacterial solute-binding protein 5 family. In terms of assembly, the complex is composed of two ATP-binding proteins (GsiA), two transmembrane proteins (GsiC and GsiD) and a solute-binding protein (GsiB).

The protein resides in the periplasm. Its function is as follows. Part of the ABC transporter complex GsiABCD involved in glutathione import. Binds glutathione. This is Glutathione-binding protein GsiB from Shigella flexneri serotype 5b (strain 8401).